Here is a 323-residue protein sequence, read N- to C-terminus: MNALPPAIFLMGPTAAGKTDLAIELSKVLPCELISVDSALVYRGMDIGTAKPSKAQLAEYPHRLIDILDPAQSYSAADFRSDALAAMAEITARGNIPLLVGGTMLYFKALLHGLADMPAADAQVRAQLEADAQAYGWQSLHDQLAVVDPVSAARIHPNDPQRLIRALEVYRVSGMSMTAHREQQTAQSTEAAASGRQQLPYTVANLAIAPADRKVLHQRIALRFEQMLDQGFLDEVLALRSRGDLHSGLPSIRAVGYRQVWDHLDGKLTRDEMQERGIIATRQLAKRQFTWLRSWEDLHWLDSLASDNLSRALKYLGSVSILS.

12–19 (GPTAAGKT) lines the ATP pocket. Position 14-19 (14-19 (TAAGKT)) interacts with substrate. Interaction with substrate tRNA stretches follow at residues 37–40 (DSAL) and 161–165 (QRLIR).

This sequence belongs to the IPP transferase family. As to quaternary structure, monomer. Mg(2+) is required as a cofactor.

The enzyme catalyses adenosine(37) in tRNA + dimethylallyl diphosphate = N(6)-dimethylallyladenosine(37) in tRNA + diphosphate. Catalyzes the transfer of a dimethylallyl group onto the adenine at position 37 in tRNAs that read codons beginning with uridine, leading to the formation of N6-(dimethylallyl)adenosine (i(6)A). In Pseudomonas savastanoi pv. phaseolicola (strain 1448A / Race 6) (Pseudomonas syringae pv. phaseolicola (strain 1448A / Race 6)), this protein is tRNA dimethylallyltransferase.